Consider the following 263-residue polypeptide: Pyruvate formate-lyase-activating enzyme (263 aa).

Residues 23–260 (VDGPGIRFVV…TETYEEYKKR (238 aa)) form the Radical SAM core domain. Positions 37, 41, and 44 each coordinate [4Fe-4S] cluster. S-adenosyl-L-methionine contacts are provided by residues 43–45 (YCH), Gly87, 142–144 (DIK), and His215.

This sequence belongs to the organic radical-activating enzymes family. [4Fe-4S] cluster is required as a cofactor.

The protein resides in the cytoplasm. The enzyme catalyses glycyl-[formate C-acetyltransferase] + reduced [flavodoxin] + S-adenosyl-L-methionine = glycin-2-yl radical-[formate C-acetyltransferase] + semiquinone [flavodoxin] + 5'-deoxyadenosine + L-methionine + H(+). In terms of biological role, activation of pyruvate formate-lyase under anaerobic conditions by generation of an organic free radical, using S-adenosylmethionine and reduced flavodoxin as cosubstrates to produce 5'-deoxy-adenosine. The chain is Pyruvate formate-lyase-activating enzyme (act) from Streptococcus mutans serotype c (strain ATCC 700610 / UA159).